The chain runs to 158 residues: Small ribosomal subunit protein uS7 (158 aa).

It belongs to the universal ribosomal protein uS7 family. Part of the 30S ribosomal subunit. Contacts proteins S9 and S11.

Functionally, one of the primary rRNA binding proteins, it binds directly to 16S rRNA where it nucleates assembly of the head domain of the 30S subunit. Is located at the subunit interface close to the decoding center, probably blocks exit of the E-site tRNA. The chain is Small ribosomal subunit protein uS7 from Wolbachia pipientis subsp. Culex pipiens (strain wPip).